A 156-amino-acid chain; its full sequence is Ribosomal RNA large subunit methyltransferase H (156 aa).

S-adenosyl-L-methionine is bound by residues L73, G104, and 123–128 (LSALTL).

Belongs to the RNA methyltransferase RlmH family. In terms of assembly, homodimer.

The protein resides in the cytoplasm. It catalyses the reaction pseudouridine(1915) in 23S rRNA + S-adenosyl-L-methionine = N(3)-methylpseudouridine(1915) in 23S rRNA + S-adenosyl-L-homocysteine + H(+). In terms of biological role, specifically methylates the pseudouridine at position 1915 (m3Psi1915) in 23S rRNA. This chain is Ribosomal RNA large subunit methyltransferase H, found in Vibrio parahaemolyticus serotype O3:K6 (strain RIMD 2210633).